A 388-amino-acid chain; its full sequence is Succinate--CoA ligase [ADP-forming] subunit beta (388 aa).

Positions 9–244 (KEILRKFGVA…LDEEDPAEIE (236 aa)) constitute an ATP-grasp domain. ATP-binding positions include K46, 53–55 (GRG), E99, A102, and E107. Mg(2+) is bound by residues N199 and D213. Substrate is bound by residues N264 and 321–323 (GIM).

It belongs to the succinate/malate CoA ligase beta subunit family. In terms of assembly, heterotetramer of two alpha and two beta subunits. Mg(2+) serves as cofactor.

The enzyme catalyses succinate + ATP + CoA = succinyl-CoA + ADP + phosphate. It catalyses the reaction GTP + succinate + CoA = succinyl-CoA + GDP + phosphate. The protein operates within carbohydrate metabolism; tricarboxylic acid cycle; succinate from succinyl-CoA (ligase route): step 1/1. Its function is as follows. Succinyl-CoA synthetase functions in the citric acid cycle (TCA), coupling the hydrolysis of succinyl-CoA to the synthesis of either ATP or GTP and thus represents the only step of substrate-level phosphorylation in the TCA. The beta subunit provides nucleotide specificity of the enzyme and binds the substrate succinate, while the binding sites for coenzyme A and phosphate are found in the alpha subunit. The sequence is that of Succinate--CoA ligase [ADP-forming] subunit beta from Burkholderia lata (strain ATCC 17760 / DSM 23089 / LMG 22485 / NCIMB 9086 / R18194 / 383).